A 105-amino-acid polypeptide reads, in one-letter code: MQILTGTAKFDNASFQFLHKTIDVFGSVVLVEGCDPTRSITWVHAWTVTDGVITQVREYFNTSLTVTRFGKSDISSITTLHCPSVWESSLPNRVGKSVPGLVLAL.

The protein to potato anionic peroxidase. In terms of tissue distribution, ubiquitous.

This chain is Wound-induced protein 1 (WUN1), found in Solanum tuberosum (Potato).